The chain runs to 145 residues: 3-dehydroquinate dehydratase 1 (145 aa).

Y24 acts as the Proton acceptor in catalysis. Substrate contacts are provided by N75, H81, and D88. The active-site Proton donor is H101. Substrate-binding positions include 102–103 (IS) and R112.

It belongs to the type-II 3-dehydroquinase family. As to quaternary structure, homododecamer.

The enzyme catalyses 3-dehydroquinate = 3-dehydroshikimate + H2O. Its pathway is metabolic intermediate biosynthesis; chorismate biosynthesis; chorismate from D-erythrose 4-phosphate and phosphoenolpyruvate: step 3/7. Catalyzes a trans-dehydration via an enolate intermediate. The polypeptide is 3-dehydroquinate dehydratase 1 (aroQ1) (Agrobacterium fabrum (strain C58 / ATCC 33970) (Agrobacterium tumefaciens (strain C58))).